The sequence spans 101 residues: Small ribosomal subunit protein uS14 (101 aa).

It belongs to the universal ribosomal protein uS14 family. In terms of assembly, part of the 30S ribosomal subunit. Contacts proteins S3 and S10.

In terms of biological role, binds 16S rRNA, required for the assembly of 30S particles and may also be responsible for determining the conformation of the 16S rRNA at the A site. In Aeromonas hydrophila subsp. hydrophila (strain ATCC 7966 / DSM 30187 / BCRC 13018 / CCUG 14551 / JCM 1027 / KCTC 2358 / NCIMB 9240 / NCTC 8049), this protein is Small ribosomal subunit protein uS14.